The chain runs to 325 residues: Diacylglycerol acyltransferase/mycolyltransferase Ag85B (325 aa).

A signal peptide spans 1–40; the sequence is MTDVSGKIRAWGRRLLVGAAAAAALPGLVGLAGGAATAGA. 82 to 83 contributes to the substrate binding site; it reads LR. The tract at residues 98 to 108 is fibronectin-binding; it reads FEWYYQSGLSV. An intrachain disulfide couples Cys127 to Cys132. Residues Ser166 and Asp194 each coordinate substrate. Ser166 (nucleophile) is an active-site residue. Glu270 is a catalytic residue. Substrate-binding positions include 272-275, Lys279, and 302-304; these read FVRS and HSW. His302 is a catalytic residue.

Belongs to the mycobacterial A85 antigen family.

The protein localises to the secreted. The enzyme catalyses 2 alpha,alpha'-trehalose 6-mycolate = alpha,alpha'-trehalose 6,6'-bismycolate + alpha,alpha-trehalose. It catalyses the reaction an acyl-CoA + a 1,2-diacyl-sn-glycerol = a triacyl-sn-glycerol + CoA. Functionally, the antigen 85 proteins (FbpA, FbpB, FbpC) are responsible for the high affinity of mycobacteria for fibronectin, a large adhesive glycoprotein, which facilitates the attachment of M.tuberculosis to murine alveolar macrophages (AMs). They also help to maintain the integrity of the cell wall by catalyzing the transfer of mycolic acids to cell wall arabinogalactan and through the synthesis of alpha,alpha-trehalose dimycolate (TDM, cord factor). They catalyze the transfer of a mycoloyl residue from one molecule of alpha,alpha-trehalose monomycolate (TMM) to another TMM, leading to the formation of TDM. This Mycobacterium kansasii protein is Diacylglycerol acyltransferase/mycolyltransferase Ag85B (fbpB).